We begin with the raw amino-acid sequence, 112 residues long: Type III inner-rod protein PscI (112 aa).

It belongs to the YscI/HrpB family. In terms of assembly, homomultimer (through its C-terminal region).

In terms of biological role, component of the type III secretion (T3S) injectisome that translocates effector toxins into host cells, facilitating the establishment and dissemination of infection. Polymerizes into flexible and regularly twisted fibrils and plays an essential role in needle assembly. The sequence is that of Type III inner-rod protein PscI (pscI) from Pseudomonas aeruginosa (strain ATCC 15692 / DSM 22644 / CIP 104116 / JCM 14847 / LMG 12228 / 1C / PRS 101 / PAO1).